The sequence spans 202 residues: Dephospho-CoA kinase (202 aa).

One can recognise a DPCK domain in the interval 5-202 (VIGLTGGIGS…KKYLTLTKMV (198 aa)). 13-18 (GSGKTT) provides a ligand contact to ATP.

It belongs to the CoaE family.

The protein localises to the cytoplasm. The enzyme catalyses 3'-dephospho-CoA + ATP = ADP + CoA + H(+). Its pathway is cofactor biosynthesis; coenzyme A biosynthesis; CoA from (R)-pantothenate: step 5/5. Its function is as follows. Catalyzes the phosphorylation of the 3'-hydroxyl group of dephosphocoenzyme A to form coenzyme A. The sequence is that of Dephospho-CoA kinase from Colwellia psychrerythraea (strain 34H / ATCC BAA-681) (Vibrio psychroerythus).